A 295-amino-acid polypeptide reads, in one-letter code: Methylamine utilization protein MauJ (295 aa).

The protein operates within one-carbon metabolism; methylamine degradation. This Methylorubrum extorquens (strain ATCC 14718 / DSM 1338 / JCM 2805 / NCIMB 9133 / AM1) (Methylobacterium extorquens) protein is Methylamine utilization protein MauJ (mauJ).